Consider the following 373-residue polypeptide: GTP cyclohydrolase 1 type 2 homolog (373 aa).

Residues His-68, His-69, Asp-107, His-333, and Glu-336 each contribute to the a divalent metal cation site.

The protein belongs to the GTP cyclohydrolase I type 2/NIF3 family. In terms of assembly, homohexamer.

This is GTP cyclohydrolase 1 type 2 homolog (yqfO) from Bacillus subtilis (strain 168).